The sequence spans 205 residues: uncharacterized protein (205 aa).

This is an uncharacterized protein from Methanococcus vannielii (strain ATCC 35089 / DSM 1224 / JCM 13029 / OCM 148 / SB).